We begin with the raw amino-acid sequence, 122 residues long: MIQMQSTLDVACNSGARRVQCIKVLGGSHRRYAGIGDIIKVSVKEAIPRAKAKKGDVYNAVVVRTKKGVRRPDGSVIRFDRNAAVLLNANLAPIGTRIFGPVTRELRTEQFMKIVSLAPEVL.

This sequence belongs to the universal ribosomal protein uL14 family. Part of the 50S ribosomal subunit. Forms a cluster with proteins L3 and L19. In the 70S ribosome, L14 and L19 interact and together make contacts with the 16S rRNA in bridges B5 and B8.

Its function is as follows. Binds to 23S rRNA. Forms part of two intersubunit bridges in the 70S ribosome. The protein is Large ribosomal subunit protein uL14 of Shewanella denitrificans (strain OS217 / ATCC BAA-1090 / DSM 15013).